The primary structure comprises 629 residues: uncharacterized protein (629 aa).

Positions 1-11 are enriched in polar residues; the sequence is MSDDQQNGKQN. Disordered regions lie at residues 1-24, 62-87, 197-464, and 493-560; these read MSDDQQNGKQNTTTTTSTPTEQDD, SNNNNNNNNDSVNNNSNNNINNSNYN, SEES…SSLI, and PTPT…STPD. Over residues 247-264 the composition is skewed to low complexity; that stretch reads PSSSSSSSSLINSPTTSK. Residues 274–288 show a composition bias toward polar residues; that stretch reads PTINPKSLFGLSSTI. Residues 294–430 are compositionally biased toward basic and acidic residues; sequence VKTEKEKEKE…DETLNKETPH (137 aa). 2 stretches are compositionally biased toward low complexity: residues 434 to 464 and 493 to 554; these read PHITTKKSPNLTPPISSTASPPSVTTYSSLI and PTPT…NNNN.

This is an uncharacterized protein from Dictyostelium discoideum (Social amoeba).